Here is a 327-residue protein sequence, read N- to C-terminus: Urokinase plasminogen activator surface receptor (327 aa).

The N-terminal stretch at 1–23 (MGLPRRLLLLLLLATTCVPASQG) is a signal peptide. 3 consecutive UPAR/Ly6 domains span residues 24 to 117 (LQCM…GRYL), 117 to 212 (LECA…PPNG), and 213 to 298 (FQCY…SPTG). Intrachain disulfides connect Cys-26–Cys-47, Cys-29–Cys-35, and Cys-40–Cys-68. N-linked (GlcNAc...) asparagine glycosylation occurs at Asn-32. Asn-75 carries an N-linked (GlcNAc...) asparagine glycan. Intrachain disulfides connect Cys-94–Cys-99, Cys-119–Cys-146, Cys-122–Cys-129, Cys-139–Cys-168, Cys-174–Cys-191, Cys-192–Cys-197, Cys-215–Cys-243, Cys-218–Cys-226, Cys-236–Cys-262, Cys-268–Cys-287, and Cys-288–Cys-293. N-linked (GlcNAc...) asparagine glycans are attached at residues Asn-183, Asn-193, Asn-221, Asn-254, and Asn-282. Residue Gly-298 is the site of GPI-anchor amidated glycine attachment. Positions 299-327 (GAPRPGPAQLSLIASLLLTLGLWGVLLWT) are cleaved as a propeptide — removed in mature form.

Monomer. Interacts (via the UPAR/Ly6 domains) with SRPX2. Interacts with MRC2. Interacts with SORL1 (via N-terminal ectodomain); this interaction decreases PLAUR internalization. The ternary complex composed of PLAUR-PLAU-SERPINE1 also interacts with SORL1. Interacts with CD82; this interaction prevents PLAUR from binding to its high affinity ligand PLAU. In terms of tissue distribution, expressed in angiogenic endothelial cells (at protein level).

Its subcellular location is the cell membrane. The protein resides in the secreted. Functionally, acts as a receptor for urokinase plasminogen activator. Plays a role in localizing and promoting plasmin formation. Mediates the proteolysis-independent signal transduction activation effects of U-PA. The polypeptide is Urokinase plasminogen activator surface receptor (Plaur) (Mus musculus (Mouse)).